Consider the following 908-residue polypeptide: DNA mismatch repair protein MutS (908 aa).

Position 662–669 (662–669) interacts with ATP; it reads GPNMGGKS.

Belongs to the DNA mismatch repair MutS family.

Its function is as follows. This protein is involved in the repair of mismatches in DNA. It is possible that it carries out the mismatch recognition step. This protein has a weak ATPase activity. The polypeptide is DNA mismatch repair protein MutS (Rhizobium etli (strain ATCC 51251 / DSM 11541 / JCM 21823 / NBRC 15573 / CFN 42)).